We begin with the raw amino-acid sequence, 187 residues long: Calcium and integrin-binding family member 2 (187 aa).

EF-hand domains follow at residues 66–101 (RENPFKERIVEAFSEDGEGNLTFNDFVDMFSVLCES), 103–138 (PRELKANYAFKIYDFNTDNFICKEDLEMTLARLTKS), and 144–179 (EVVLVCDKVIEEADLDGDGKLGFADFEDMIAKAPDF). Asp116, Asn118, Asp120, Asp127, Asp157, Asp159, Asp161, Lys163, and Asp168 together coordinate Ca(2+).

In terms of assembly, monomer. Homodimer. Interacts with WHRN and MYO7A. Interacts with ITGA2B (via C-terminus cytoplasmic tail region); this interaction is stabilized/increased in a calcium and magnesium-dependent manner. Interacts with ITGA7 (via C-terminus cytoplasmic tail region); this interaction is stabilized/increased in a calcium and magnesium-dependent manner. Interacts with TMC1. Interacts with TMC2. Interacts with PIEZO1. As to expression, expressed in inner and outer segments of photoreceptor cells, as well as in the pigmented epithelium. Also observed in the inner and outer plexiform layers and in the ganglion cell layer (at protein level). Expressed in sensory hair cell stereocilia, with expression mainly at the basal body of the kinocilium and in the hair bundle stereocilia; and the apical surface of hair cells (at protein level). Located in the tip region of the stereocilia and at the apical surface of hair cells around the cuticular plate (at protein level). Not expressed in the hair bundles of the vestibular hair cells. Strongly expressed in skeletal muscles, brain, kidney and liver. Expressed in the skeletal muscle, retina and cochlea. Expressed in megakaryocytes and endothelial cells. Expressed in heart, spleen, lung, and inner ear. In the inner ear, expressed in the vestibule, basilar membrane and spiral ganglion cells. Expressed in the supporting cells in both the organ of Corti and the vestibular sensory epithelia.

Its subcellular location is the cytoplasm. It localises to the cell projection. The protein localises to the stereocilium. The protein resides in the photoreceptor inner segment. It is found in the cilium. Its subcellular location is the photoreceptor outer segment. It localises to the cell membrane. The protein localises to the sarcolemma. Calcium- and integrin-binding protein that plays a role in intracellular calcium homeostasis. Acts as an auxiliary subunit of the sensory mechanoelectrical transduction (MET) channel in hair cells. Essential for mechanoelectrical transduction (MET) currents in auditory hair cells and thereby required for hearing. Regulates the function of hair cell mechanotransduction by controlling the distribution of transmembrane channel-like proteins TMC1 and TMC2, and by regulating the function of the MET channels in hair cells. Required for the maintenance of auditory hair cell stereocilia bundle morphology and function and for hair-cell survival in the cochlea. Critical for proper photoreceptor cell maintenance and function. Plays a role in intracellular calcium homeostasis by decreasing ATP-induced calcium release. Seems to be dispensable for vestibular functions. This is Calcium and integrin-binding family member 2 (Cib2) from Mus musculus (Mouse).